We begin with the raw amino-acid sequence, 54 residues long: Large ribosomal subunit protein bL32 (54 aa).

Belongs to the bacterial ribosomal protein bL32 family.

The sequence is that of Large ribosomal subunit protein bL32 from Buchnera aphidicola subsp. Baizongia pistaciae (strain Bp).